A 308-amino-acid polypeptide reads, in one-letter code: Elongation factor Ts (308 aa).

The interval 80–83 is involved in Mg(2+) ion dislocation from EF-Tu; sequence TDFV.

This sequence belongs to the EF-Ts family.

It is found in the cytoplasm. Associates with the EF-Tu.GDP complex and induces the exchange of GDP to GTP. It remains bound to the aminoacyl-tRNA.EF-Tu.GTP complex up to the GTP hydrolysis stage on the ribosome. The sequence is that of Elongation factor Ts from Agrobacterium fabrum (strain C58 / ATCC 33970) (Agrobacterium tumefaciens (strain C58)).